Consider the following 429-residue polypeptide: D-galactonate dehydratase family member Caci_4410 (429 aa).

The interval 1 to 22 (MTDANHLLDPSGALPQTRPPWT) is disordered. Asp-233 serves as a coordination point for Mg(2+). His-235 is a binding site for D-arabinonate. Residues Glu-259 and Glu-285 each coordinate Mg(2+). D-arabinonate is bound by residues Glu-285, Arg-306, His-335, and Glu-362.

It belongs to the mandelate racemase/muconate lactonizing enzyme family. GalD subfamily.

Has no detectable activity with D-mannonate and with a panel of 70 other acid sugars (in vitro), in spite of the conservation of the residues that are expected to be important for catalytic activity and cofactor binding. May have evolved a divergent function. The chain is D-galactonate dehydratase family member Caci_4410 from Catenulispora acidiphila (strain DSM 44928 / JCM 14897 / NBRC 102108 / NRRL B-24433 / ID139908).